The following is a 66-amino-acid chain: ATP synthase subunit c (66 aa).

2 helical membrane passes run 3 to 23 (LTFL…GLLM) and 45 to 65 (FLGV…SFII).

Belongs to the ATPase C chain family. As to quaternary structure, F-type ATPases have 2 components, F(1) - the catalytic core - and F(0) - the membrane proton channel. F(1) has five subunits: alpha(3), beta(3), gamma(1), delta(1), epsilon(1). F(0) has three main subunits: a(1), b(2) and c(10-14). The alpha and beta chains form an alternating ring which encloses part of the gamma chain. F(1) is attached to F(0) by a central stalk formed by the gamma and epsilon chains, while a peripheral stalk is formed by the delta and b chains.

Its subcellular location is the cell membrane. Functionally, f(1)F(0) ATP synthase produces ATP from ADP in the presence of a proton or sodium gradient. F-type ATPases consist of two structural domains, F(1) containing the extramembraneous catalytic core and F(0) containing the membrane proton channel, linked together by a central stalk and a peripheral stalk. During catalysis, ATP synthesis in the catalytic domain of F(1) is coupled via a rotary mechanism of the central stalk subunits to proton translocation. In terms of biological role, key component of the F(0) channel; it plays a direct role in translocation across the membrane. A homomeric c-ring of between 10-14 subunits forms the central stalk rotor element with the F(1) delta and epsilon subunits. This Streptococcus pneumoniae serotype 19F (strain G54) protein is ATP synthase subunit c.